The sequence spans 306 residues: Pantothenate kinase (306 aa).

91 to 98 contributes to the ATP binding site; sequence GSVAVGKS.

The protein belongs to the prokaryotic pantothenate kinase family.

It is found in the cytoplasm. The catalysed reaction is (R)-pantothenate + ATP = (R)-4'-phosphopantothenate + ADP + H(+). Its pathway is cofactor biosynthesis; coenzyme A biosynthesis; CoA from (R)-pantothenate: step 1/5. The sequence is that of Pantothenate kinase from Streptococcus pyogenes serotype M5 (strain Manfredo).